Consider the following 481-residue polypeptide: Extracellular exo-alpha-(1-&gt;5)-L-arabinofuranosidase (481 aa).

An N-terminal signal peptide occupies residues 1–27 (MRRLTVRLFTAVLAALALLTMGTPAHA). The interval 37–336 (FTNPLAEKRA…KVYWNADGTP (300 aa)) is catalytic. Aspartate 47 acts as the Proton acceptor in catalysis. Asparagine 186 is a binding site for substrate. Glutamate 223 functions as the Proton donor in the catalytic mechanism. Residues histidine 287, arginine 321, 363–366 (HWDF), aspartate 379, 457–460 (HYEN), and aspartate 475 each bind substrate. An ABD region spans residues 349 to 479 (VRFSSYNYPD…ALDRQDATFY (131 aa)).

The protein belongs to the glycosyl hydrolase 43 family.

The protein localises to the secreted. The catalysed reaction is Hydrolysis of terminal non-reducing alpha-L-arabinofuranoside residues in alpha-L-arabinosides.. Its pathway is glycan metabolism; L-arabinan degradation. Functionally, involved in the degradation of arabinan and is a key enzyme in the complete degradation of the plant cell wall. Catalyzes only the cleavage of terminal alpha-(1-&gt;5) arabinofuranosyl bonds of arabinan present in the arabinofuranosyl polysaccharides or oligosaccharides. It cannot act on other arabinose-containing polysaccharides and arabinoxylo-oligosaccharides. The polypeptide is Extracellular exo-alpha-(1-&gt;5)-L-arabinofuranosidase (Streptomyces avermitilis (strain ATCC 31267 / DSM 46492 / JCM 5070 / NBRC 14893 / NCIMB 12804 / NRRL 8165 / MA-4680)).